The sequence spans 20 residues: Dermaseptin-N1 (20 aa).

Residue L20 is modified to Leucine amide.

In terms of tissue distribution, expressed by the skin glands.

It localises to the secreted. Its function is as follows. Antimicrobial peptide with moderate activity against both Gram-positive and Gram-negative bacteria, and important activity against Leishmania species (L.amazonensis and L.infantum). Acts on both Leishmania promastigote and amastigote forms. Shows activity against E.coli (MIC=17.8 uM), S.aureus (MIC=32.3 uM) and the phytopathogenic bacterium Xanthomonas axonopodis (MIC=2 uM). Shows low cytotoxicity against mammalian cells in models of peritoneal macrophages. The protein is Dermaseptin-N1 of Pithecopus nordestinus (Northeastern Brazilian leaf frog).